The sequence spans 241 residues: Phosphoribosyl isomerase A (241 aa).

Asp-11 acts as the Proton acceptor in catalysis. Asp-130 acts as the Proton donor in catalysis.

The protein belongs to the HisA/HisF family.

The protein localises to the cytoplasm. It catalyses the reaction 1-(5-phospho-beta-D-ribosyl)-5-[(5-phospho-beta-D-ribosylamino)methylideneamino]imidazole-4-carboxamide = 5-[(5-phospho-1-deoxy-D-ribulos-1-ylimino)methylamino]-1-(5-phospho-beta-D-ribosyl)imidazole-4-carboxamide. The enzyme catalyses N-(5-phospho-beta-D-ribosyl)anthranilate = 1-(2-carboxyphenylamino)-1-deoxy-D-ribulose 5-phosphate. It participates in amino-acid biosynthesis; L-histidine biosynthesis; L-histidine from 5-phospho-alpha-D-ribose 1-diphosphate: step 4/9. The protein operates within amino-acid biosynthesis; L-tryptophan biosynthesis; L-tryptophan from chorismate: step 3/5. In terms of biological role, involved in both the histidine and tryptophan biosynthetic pathways. The protein is Phosphoribosyl isomerase A of Streptomyces griseus subsp. griseus (strain JCM 4626 / CBS 651.72 / NBRC 13350 / KCC S-0626 / ISP 5235).